The sequence spans 193 residues: Imidazoleglycerol-phosphate dehydratase (193 aa).

The protein belongs to the imidazoleglycerol-phosphate dehydratase family.

It is found in the cytoplasm. It carries out the reaction D-erythro-1-(imidazol-4-yl)glycerol 3-phosphate = 3-(imidazol-4-yl)-2-oxopropyl phosphate + H2O. The protein operates within amino-acid biosynthesis; L-histidine biosynthesis; L-histidine from 5-phospho-alpha-D-ribose 1-diphosphate: step 6/9. In Saccharolobus islandicus (strain M.16.27) (Sulfolobus islandicus), this protein is Imidazoleglycerol-phosphate dehydratase.